The primary structure comprises 57 residues: Large ribosomal subunit protein bL33 (57 aa).

The protein belongs to the bacterial ribosomal protein bL33 family.

The sequence is that of Large ribosomal subunit protein bL33 from Shewanella amazonensis (strain ATCC BAA-1098 / SB2B).